The sequence spans 437 residues: MLARNLRCLHPNTFASLKTNVSYHGVKCLASQSKRGFKVWADVPMGPPDPIFGITEAYKKDGDVKKMNLGAGTYRDDAGKPYVLPSVRQAETELLSQKLDKEYAPITGIPSFRVQATKLAYGDVYESIKDRLVSAQSISGTGALCIAANFLASFYPSKTIYVSDPTWGNHKNVFSRAGLTVKSYKYYDPATRGLDIKGMLSDLTSAPDGSIILLHACAHNPTGVDPTKAQWDDILKTMQKKNHFALLDMAYQGFASGDFARDAYATRLFASSNVPMLLCQSFAKNMGLYGERAGCFSILANDAEEAARIESQTKILIRALYSNPPVNGARIANHILSNPALREQWAGEVVGMSERLKSMRKALRNILEKDLKNKHSWKHITDQIGMFCYTGLNPQQVDVLAKQYHIYLTKNGRISISGLNTSNVRYFAEAINAVTSN.

L-aspartate is bound by residues Gly72, Trp167, and Asn220. Lys284 bears the N6-(pyridoxal phosphate)lysine mark. Arg413 serves as a coordination point for L-aspartate.

It belongs to the class-I pyridoxal-phosphate-dependent aminotransferase family. Homodimer. Pyridoxal 5'-phosphate is required as a cofactor.

It localises to the mitochondrion matrix. The enzyme catalyses L-aspartate + 2-oxoglutarate = oxaloacetate + L-glutamate. Functionally, plays a key role in amino acid metabolism. Important for metabolite exchange between mitochondria and cytosol. In Schizosaccharomyces pombe (strain 972 / ATCC 24843) (Fission yeast), this protein is Aspartate aminotransferase, mitochondrial.